Reading from the N-terminus, the 356-residue chain is Phospho-N-acetylmuramoyl-pentapeptide-transferase (356 aa).

The next 9 helical transmembrane spans lie at 27–47 (AAAI…IGWM), 74–94 (MGGL…MDFA), 97–117 (YVWA…IDDY), 128–148 (VSGK…CYLI), 164–184 (PVID…VGTA), 201–221 (VIIA…AVFA), 241–261 (AIIG…AIFM), 284–304 (IVLG…IIQV), and 333–353 (TVVI…LATL).

This sequence belongs to the glycosyltransferase 4 family. MraY subfamily. Requires Mg(2+) as cofactor.

The protein localises to the cell inner membrane. The enzyme catalyses UDP-N-acetyl-alpha-D-muramoyl-L-alanyl-gamma-D-glutamyl-meso-2,6-diaminopimeloyl-D-alanyl-D-alanine + di-trans,octa-cis-undecaprenyl phosphate = di-trans,octa-cis-undecaprenyl diphospho-N-acetyl-alpha-D-muramoyl-L-alanyl-D-glutamyl-meso-2,6-diaminopimeloyl-D-alanyl-D-alanine + UMP. The protein operates within cell wall biogenesis; peptidoglycan biosynthesis. Its function is as follows. Catalyzes the initial step of the lipid cycle reactions in the biosynthesis of the cell wall peptidoglycan: transfers peptidoglycan precursor phospho-MurNAc-pentapeptide from UDP-MurNAc-pentapeptide onto the lipid carrier undecaprenyl phosphate, yielding undecaprenyl-pyrophosphoryl-MurNAc-pentapeptide, known as lipid I. The sequence is that of Phospho-N-acetylmuramoyl-pentapeptide-transferase from Zymomonas mobilis subsp. mobilis (strain ATCC 31821 / ZM4 / CP4).